Reading from the N-terminus, the 101-residue chain is RNA-binding protein Hfq (101 aa).

The region spanning 9-68 (DPFLNALRRERVPVSIYLVNGIKLQGQVESFDQFVILLKNTVSQMVYKHAISTVVPSRPV) is the Sm domain. The interval 63-101 (VPSRPVSHHSNTPSGSTNNYHGSNPSAPQQPQQDSDDAE) is disordered. Residues 70-86 (HHSNTPSGSTNNYHGSN) are compositionally biased toward polar residues.

This sequence belongs to the Hfq family. As to quaternary structure, homohexamer.

RNA chaperone that binds small regulatory RNA (sRNAs) and mRNAs to facilitate mRNA translational regulation in response to envelope stress, environmental stress and changes in metabolite concentrations. Also binds with high specificity to tRNAs. The polypeptide is RNA-binding protein Hfq (Yersinia pseudotuberculosis serotype O:1b (strain IP 31758)).